The primary structure comprises 1364 residues: RecQ-like DNA helicase BLM (1364 aa).

Disordered regions lie at residues 108-131 and 147-174; these read VHGNDSANKPPSTEDAASKKTGIN and DDFDTSVSPPKSHAGKGGKTPQKCKNTS. The necessary for dimerization and homooligomerization stretch occupies residues 328-377; the sequence is DSKVPSQLLTLMLEICDLVDKIPISELHVLSCGLDLKKKRDMRKRLLSND. Disordered stretches follow at residues 380–416, 484–515, and 535–580; these read FRSSPADSSTVSLTSCTSSTQNRDFNVNAPKGAESLS, RFNTPQNEKPISSSTCTRPYSQPIDDMDNPDL, and SPAA…SLLS. The span at 387–399 shows a compositional bias: low complexity; it reads SSTVSLTSCTSST. The segment covering 484-503 has biased composition (polar residues); it reads RFNTPQNEKPISSSTCTRPY. Basic and acidic residues predominate over residues 555-566; that stretch reads AQLDSRNKEKNT. Residues 567–580 show a composition bias toward polar residues; sequence RNNTGDTTNPSLLS. ATP is bound by residues 620–624 and 644–648; these read FRTNQ and GGGKS. Residues 628–803 form the Helicase ATP-binding domain; sequence INACLCGEDC…LNQLKMTKPQ (176 aa). Residues 747–750 carry the DEAH box motif; sequence DEAH. 3' overhang DNA-binding regions lie at residues 822–825 and 849–851; these read KPKR and SRH. Residues 829-976 form the Helicase C-terminal domain; sequence DCVEWIKKHH…TKQTHFNNLY (148 aa). Arg934 lines the ATP pocket. The segment at 952-955 is 3' overhang DNA-binding; the sequence is RIRR. 4 residues coordinate Zn(2+): Cys988, Cys1007, Cys1015, and Cys1018. A DNA Holliday junction binding region spans residues 1046–1090; it reads LVQGRGKGRSNNTRLTLNMMVDIFLGSKSAKIQTGLFGKGAAYSR. 3' overhang DNA-binding regions lie at residues 1061 to 1063, 1072 to 1076, and 1111 to 1117; these read TLN, SKSAK, and YITFNDQ. The HRDC domain occupies 1164–1244; sequence EEMVKKCQAE…QKYSEWTLPV (81 aa). Residues 1179–1196 form a necessary for ssDNA and DNA Holliday junction binding region; sequence KRLGKIFGVHYFNIFNTA. Residue Asn1194 participates in ATP binding. Positions 1251–1364 are disordered; the sequence is SGGPANVSAR…RFLKPSYSMF (114 aa). Residues 1273–1282 show a composition bias toward polar residues; sequence KSSYFSSNNK. The span at 1283 to 1300 shows a compositional bias: basic residues; the sequence is KGPKRKNSSYFGKSKKRK. The Nuclear localization signal signature appears at 1285–1301; the sequence is PKRKNSSYFGKSKKRKT. Positions 1306-1335 are enriched in polar residues; it reads QQSRSKNGNSSYARKNSTAKTSSSYISGSK.

This sequence belongs to the helicase family. RecQ subfamily. Monomer. Homodimer (via N-terminus). Homotetramer (via N-terminus); dimer of dimers. Homohexamer (via N-terminus). Self-association negatively regulates DNA unwinding amplitude and rate. Oligomer complexes dissociate into monomer in presence of ATP. It depends on Zn(2+) as a cofactor.

It is found in the nucleus. It carries out the reaction Couples ATP hydrolysis with the unwinding of duplex DNA by translocating in the 3'-5' direction.. The enzyme catalyses ATP + H2O = ADP + phosphate + H(+). Functionally, ATP-dependent DNA helicase that unwinds single- and double-stranded DNA in a 3'-5' direction. Participates in DNA replication and repair. Involved in 5'-end resection of DNA during double-strand break (DSB) repair. Negatively regulates sister chromatid exchange (SCE). Stimulates DNA 4-way junction branch migration and DNA Holliday junction dissolution. Binds single-stranded DNA (ssDNA), forked duplex DNA and DNA Holliday junction. This is RecQ-like DNA helicase BLM (blm) from Xenopus laevis (African clawed frog).